The primary structure comprises 287 residues: Pyridoxal 5'-phosphate synthase subunit PdxS (287 aa).

Position 21 (Asp-21) interacts with D-ribose 5-phosphate. Catalysis depends on Lys-78, which acts as the Schiff-base intermediate with D-ribose 5-phosphate. Gly-150 is a binding site for D-ribose 5-phosphate. Arg-162 provides a ligand contact to D-glyceraldehyde 3-phosphate. Residues Gly-211 and 232–233 (GS) each bind D-ribose 5-phosphate.

It belongs to the PdxS/SNZ family. In terms of assembly, in the presence of PdxT, forms a dodecamer of heterodimers.

The catalysed reaction is aldehydo-D-ribose 5-phosphate + D-glyceraldehyde 3-phosphate + L-glutamine = pyridoxal 5'-phosphate + L-glutamate + phosphate + 3 H2O + H(+). It functions in the pathway cofactor biosynthesis; pyridoxal 5'-phosphate biosynthesis. Its function is as follows. Catalyzes the formation of pyridoxal 5'-phosphate from ribose 5-phosphate (RBP), glyceraldehyde 3-phosphate (G3P) and ammonia. The ammonia is provided by the PdxT subunit. Can also use ribulose 5-phosphate and dihydroxyacetone phosphate as substrates, resulting from enzyme-catalyzed isomerization of RBP and G3P, respectively. The polypeptide is Pyridoxal 5'-phosphate synthase subunit PdxS (Francisella philomiragia subsp. philomiragia (strain ATCC 25017 / CCUG 19701 / FSC 153 / O#319-036)).